Here is a 158-residue protein sequence, read N- to C-terminus: MANKTEQTVIDLISPIIEAHNDLLWDLTFTKEGGQKVLRILLDKPDHQFITMNDLTLFTQEVNELLDTVDPDPIPEAYVLDISSPGADRPLKELWHFEWAKEANENILVSLFVAKEGQKKWQGKIADLNKDGLTLTTTNGRLPLTFDEIAKAILDVQF.

Belongs to the RimP family.

The protein localises to the cytoplasm. In terms of biological role, required for maturation of 30S ribosomal subunits. This is Ribosome maturation factor RimP from Leuconostoc mesenteroides subsp. mesenteroides (strain ATCC 8293 / DSM 20343 / BCRC 11652 / CCM 1803 / JCM 6124 / NCDO 523 / NBRC 100496 / NCIMB 8023 / NCTC 12954 / NRRL B-1118 / 37Y).